Reading from the N-terminus, the 319-residue chain is Transcription factor bHLH111 (319 aa).

The disordered stretch occupies residues M1–P23. The segment covering S9 to L18 has biased composition (polar residues). Positions S195–Y244 constitute a bHLH domain.

In terms of assembly, homodimer.

Its subcellular location is the nucleus. In Arabidopsis thaliana (Mouse-ear cress), this protein is Transcription factor bHLH111 (BHLH111).